The chain runs to 173 residues: Adenine phosphoribosyltransferase (173 aa).

The protein belongs to the purine/pyrimidine phosphoribosyltransferase family. Homodimer.

Its subcellular location is the cytoplasm. The catalysed reaction is AMP + diphosphate = 5-phospho-alpha-D-ribose 1-diphosphate + adenine. It participates in purine metabolism; AMP biosynthesis via salvage pathway; AMP from adenine: step 1/1. Its function is as follows. Catalyzes a salvage reaction resulting in the formation of AMP, that is energically less costly than de novo synthesis. This chain is Adenine phosphoribosyltransferase, found in Listeria monocytogenes serotype 4b (strain CLIP80459).